The primary structure comprises 103 residues: NADH dehydrogenase [ubiquinone] 1 beta subcomplex subunit 7 (103 aa).

A CHCH domain is found at 27 to 69 (RDMCAHLLIPLNKCRQAEFYLPWKCEDERHVYEKCEYELVMER). Short sequence motifs (cx9C motif) lie at residues 30-40 (CAHLLIPLNKC) and 51-61 (CEDERHVYEKC). Intrachain disulfides connect Cys-30–Cys-61 and Cys-40–Cys-51.

The protein belongs to the complex I NDUFB7 subunit family. In terms of assembly, complex I is composed of at least 49 different subunits.

The protein localises to the mitochondrion. The protein resides in the mitochondrion inner membrane. It is found in the mitochondrion intermembrane space. Functionally, accessory subunit of the mitochondrial membrane respiratory chain NADH dehydrogenase (Complex I), that is believed not to be involved in catalysis. Complex I functions in the transfer of electrons from NADH to the respiratory chain. The immediate electron acceptor for the enzyme is believed to be ubiquinone. The protein is NADH dehydrogenase [ubiquinone] 1 beta subcomplex subunit 7 of Arabidopsis thaliana (Mouse-ear cress).